The sequence spans 331 residues: MLIAQRPTLTEESISEFRSRFVIEPLEPGFGYTLGNSLRRTLLSSIPGAAVTSIRIDGVLHEFSTVPGVKEDVTEIILNIKGLVVSSEHDEPITAYLRKQGAGQVTAADISAPAGVEIHNPELVIATLNEKAKFELELTIERGRGYVSATQNRSEFSEAGQIPVDSIYSPVLKVTYRVEATRAGERTDFDRLVVDVETKSAITPRDAIASAGRTLTELFGLARELNSAAEGIEIGPAPVDAVLSSELSMPIEDLDLSVRSYNCLKREGIHNVSELVALSETQLMNIRNFGQKSVDEVKDKLVELGLSLKDAVPGFDGAHYYSYDEDETTTN.

The segment at M1–N226 is alpha N-terminal domain (alpha-NTD). An alpha C-terminal domain (alpha-CTD) region spans residues L243–N331.

This sequence belongs to the RNA polymerase alpha chain family. In terms of assembly, homodimer. The RNAP catalytic core consists of 2 alpha, 1 beta, 1 beta' and 1 omega subunit. When a sigma factor is associated with the core the holoenzyme is formed, which can initiate transcription.

It carries out the reaction RNA(n) + a ribonucleoside 5'-triphosphate = RNA(n+1) + diphosphate. Its function is as follows. DNA-dependent RNA polymerase catalyzes the transcription of DNA into RNA using the four ribonucleoside triphosphates as substrates. The polypeptide is DNA-directed RNA polymerase subunit alpha (Clavibacter sepedonicus (Clavibacter michiganensis subsp. sepedonicus)).